A 308-amino-acid polypeptide reads, in one-letter code: UPF0282 protein PYRAB09800 (308 aa).

Belongs to the UPF0282 family.

The polypeptide is UPF0282 protein PYRAB09800 (Pyrococcus abyssi (strain GE5 / Orsay)).